The primary structure comprises 551 residues: Arginine--tRNA ligase (551 aa).

The 'HIGH' region motif lies at 123–133 (ANPTGPLTIGR).

The protein belongs to the class-I aminoacyl-tRNA synthetase family. As to quaternary structure, monomer.

The protein localises to the cytoplasm. It catalyses the reaction tRNA(Arg) + L-arginine + ATP = L-arginyl-tRNA(Arg) + AMP + diphosphate. The sequence is that of Arginine--tRNA ligase from Chlorobaculum tepidum (strain ATCC 49652 / DSM 12025 / NBRC 103806 / TLS) (Chlorobium tepidum).